The following is a 71-amino-acid chain: MPIIKVRENEPFDVALRRFKRSCEKAGILAEIRRREFYEKPTTERKRAKASAIKRLAKKLTRENARRIRMY.

The protein belongs to the bacterial ribosomal protein bS21 family.

The chain is Small ribosomal subunit protein bS21 from Buchnera aphidicola subsp. Schizaphis graminum (strain Sg).